Reading from the N-terminus, the 166-residue chain is Large ribosomal subunit protein uL10 (166 aa).

The protein belongs to the universal ribosomal protein uL10 family. In terms of assembly, part of the ribosomal stalk of the 50S ribosomal subunit. The N-terminus interacts with L11 and the large rRNA to form the base of the stalk. The C-terminus forms an elongated spine to which L12 dimers bind in a sequential fashion forming a multimeric L10(L12)X complex.

Functionally, forms part of the ribosomal stalk, playing a central role in the interaction of the ribosome with GTP-bound translation factors. This Lysinibacillus sphaericus (strain C3-41) protein is Large ribosomal subunit protein uL10.